A 254-amino-acid polypeptide reads, in one-letter code: Triosephosphate isomerase (254 aa).

Residue 12 to 14 coordinates substrate; it reads NWK. H99 functions as the Electrophile in the catalytic mechanism. Catalysis depends on E169, which acts as the Proton acceptor. Substrate is bound by residues G175, S214, and 235–236; that span reads GG.

This sequence belongs to the triosephosphate isomerase family. In terms of assembly, homodimer.

The protein resides in the cytoplasm. The enzyme catalyses D-glyceraldehyde 3-phosphate = dihydroxyacetone phosphate. It functions in the pathway carbohydrate biosynthesis; gluconeogenesis. Its pathway is carbohydrate degradation; glycolysis; D-glyceraldehyde 3-phosphate from glycerone phosphate: step 1/1. Functionally, involved in the gluconeogenesis. Catalyzes stereospecifically the conversion of dihydroxyacetone phosphate (DHAP) to D-glyceraldehyde-3-phosphate (G3P). This chain is Triosephosphate isomerase, found in Brucella abortus biovar 1 (strain 9-941).